A 227-amino-acid polypeptide reads, in one-letter code: Cytochrome c oxidase subunit 2 (227 aa).

Over 1-14 (MAYPFQLGLQDATS) the chain is Mitochondrial intermembrane. Residues 15 to 45 (PIMEELLHFHDHTLMIVFLISSLVLYIISLM) traverse the membrane as a helical segment. At 46–59 (LTTKLTHTSTMDAQ) the chain is on the mitochondrial matrix side. A helical transmembrane segment spans residues 60–87 (EVETVWTILPAIILISIALPSLRILYMM). The Mitochondrial intermembrane portion of the chain corresponds to 88-227 (DEINNPSLTV…YFEAWSTLMM (140 aa)). 6 residues coordinate Cu cation: H161, C196, E198, C200, H204, and M207. E198 is a binding site for Mg(2+). At Y218 the chain carries Phosphotyrosine.

It belongs to the cytochrome c oxidase subunit 2 family. Component of the cytochrome c oxidase (complex IV, CIV), a multisubunit enzyme composed of 14 subunits. The complex is composed of a catalytic core of 3 subunits MT-CO1, MT-CO2 and MT-CO3, encoded in the mitochondrial DNA, and 11 supernumerary subunits COX4I, COX5A, COX5B, COX6A, COX6B, COX6C, COX7A, COX7B, COX7C, COX8 and NDUFA4, which are encoded in the nuclear genome. The complex exists as a monomer or a dimer and forms supercomplexes (SCs) in the inner mitochondrial membrane with NADH-ubiquinone oxidoreductase (complex I, CI) and ubiquinol-cytochrome c oxidoreductase (cytochrome b-c1 complex, complex III, CIII), resulting in different assemblies (supercomplex SCI(1)III(2)IV(1) and megacomplex MCI(2)III(2)IV(2)). Found in a complex with TMEM177, COA6, COX18, COX20, SCO1 and SCO2. Interacts with TMEM177 in a COX20-dependent manner. Interacts with COX20. Interacts with COX16. Requires Cu cation as cofactor.

The protein localises to the mitochondrion inner membrane. It catalyses the reaction 4 Fe(II)-[cytochrome c] + O2 + 8 H(+)(in) = 4 Fe(III)-[cytochrome c] + 2 H2O + 4 H(+)(out). In terms of biological role, component of the cytochrome c oxidase, the last enzyme in the mitochondrial electron transport chain which drives oxidative phosphorylation. The respiratory chain contains 3 multisubunit complexes succinate dehydrogenase (complex II, CII), ubiquinol-cytochrome c oxidoreductase (cytochrome b-c1 complex, complex III, CIII) and cytochrome c oxidase (complex IV, CIV), that cooperate to transfer electrons derived from NADH and succinate to molecular oxygen, creating an electrochemical gradient over the inner membrane that drives transmembrane transport and the ATP synthase. Cytochrome c oxidase is the component of the respiratory chain that catalyzes the reduction of oxygen to water. Electrons originating from reduced cytochrome c in the intermembrane space (IMS) are transferred via the dinuclear copper A center (CU(A)) of subunit 2 and heme A of subunit 1 to the active site in subunit 1, a binuclear center (BNC) formed by heme A3 and copper B (CU(B)). The BNC reduces molecular oxygen to 2 water molecules using 4 electrons from cytochrome c in the IMS and 4 protons from the mitochondrial matrix. The polypeptide is Cytochrome c oxidase subunit 2 (MT-CO2) (Lycaon pictus (African wild dog)).